Here is a 501-residue protein sequence, read N- to C-terminus: Glucan endo-1,3-beta-glucosidase 3 (501 aa).

A signal peptide spans 1–18 (MAALLLLFLFLFASSALS). N-linked (GlcNAc...) asparagine glycosylation is found at asparagine 88 and asparagine 107. Catalysis depends on glutamate 116, which acts as the Proton donor. Residues asparagine 171 and asparagine 253 are each glycosylated (N-linked (GlcNAc...) asparagine). Catalysis depends on glutamate 263, which acts as the Nucleophile. Asparagine 295, asparagine 353, and asparagine 357 each carry an N-linked (GlcNAc...) asparagine glycan. A disulfide bridge links cysteine 361 with cysteine 424. N-linked (GlcNAc...) asparagine glycosylation is found at asparagine 451, asparagine 456, asparagine 457, and asparagine 466. Residue serine 470 is the site of GPI-anchor amidated serine attachment. Residues 471–501 (GCIPKYYHHPHASFGDLTLLSLLLIIALVFL) constitute a propeptide, removed in mature form.

It belongs to the glycosyl hydrolase 17 family. Contains two additional disulfide bonds.

It localises to the cell membrane. The catalysed reaction is Hydrolysis of (1-&gt;3)-beta-D-glucosidic linkages in (1-&gt;3)-beta-D-glucans.. In Arabidopsis thaliana (Mouse-ear cress), this protein is Glucan endo-1,3-beta-glucosidase 3.